The chain runs to 407 residues: MFRDSFLFARTIGCFGCFGSSGSRNQQSPKPYDDDTHSCDSDVTSTARGEEEEDEEEVEQKSRSKRSEEILKYRLDNGLICRHIPVRETNELIRGEDENGDKTINEYVRVCKIGSGSYGKVVLYRSTLDGQYYAIKAFHKSHLLRLRVAPSETAMSDVLREVMIMKILEHPNIVNLIEVIDDPETDHFYMVLEYVDGKWVYDGSGPPGALGEKTARKYLRDIVTGLMYLHAHDVIHGDIKPDNLLVTSSGTVKIGDFSVSQVFKDDDDQLRRSPGTPVFTAPECCLVSGITYSGRAADTWAVGVTLYCMILGQYPFLADTLQDTYDKIVNNPLIIPDGLNPLLRDLIEGLLCKDPSQRMTLKNVSEHPWVIGEDGHVPEYFCWCKRNAASKIEEGEANGISETSDPN.

The tract at residues 21–64 (SGSRNQQSPKPYDDDTHSCDSDVTSTARGEEEEDEEEVEQKSRS) is disordered. Positions 31-40 (PYDDDTHSCD) are enriched in basic and acidic residues. Residues 107–370 (YVRVCKIGSG…LKNVSEHPWV (264 aa)) enclose the Protein kinase domain. ATP contacts are provided by residues 113–121 (IGSGSYGKV) and lysine 136. Threonine 153 is subject to Phosphothreonine; by autocatalysis. The active-site Proton acceptor is aspartate 238. Serine 260 bears the Phosphoserine; by KIN10 mark.

The protein belongs to the protein kinase superfamily. Ser/Thr protein kinase family. In terms of assembly, associates with the SNF1-related protein kinase (SnRK) complex. Interacts with AL1, a geminivirus (TGMV) protein essential for viral replication. Expressed in shoot apical meristem, leaf primordium and emerging petiole (at protein level).

The enzyme catalyses L-seryl-[protein] + ATP = O-phospho-L-seryl-[protein] + ADP + H(+). The catalysed reaction is L-threonyl-[protein] + ATP = O-phospho-L-threonyl-[protein] + ADP + H(+). Activated when autophosphorylated at Thr-153 and inactivated when phosphorylated at Ser-260 by SnRK1.1/KIN10. Activates SnRK1.1/KIN10 and SnRK1.2/KIN11 by phosphorylation of their activation-loop 'Thr-198' and 'Thr-176', respectively. Required for the regulation by SnRK1 kinases of the transcription of a large set of genes, the modification the activity of metabolic enzymes, and the control of various nutrient-responsive cellular developmental processes. This Arabidopsis thaliana (Mouse-ear cress) protein is Serine/threonine-protein kinase GRIK2 (GRIK2).